Consider the following 349-residue polypeptide: Protein RecA (349 aa).

ATP is bound at residue 65–72 (GPESSGKT).

This sequence belongs to the RecA family.

It localises to the cytoplasm. Functionally, can catalyze the hydrolysis of ATP in the presence of single-stranded DNA, the ATP-dependent uptake of single-stranded DNA by duplex DNA, and the ATP-dependent hybridization of homologous single-stranded DNAs. It interacts with LexA causing its activation and leading to its autocatalytic cleavage. This is Protein RecA from Vibrio vulnificus (strain CMCP6).